Here is a 131-residue protein sequence, read N- to C-terminus: MQFTLIFFYATLAAFGLAAPSEQVGRDVVQEGDELDKRINFKIPYTGADLVDGDDVQEGDKLDKRINFKIPYTGADMVDGDDVQEGDKLDKRIGFKLPYRGADMVDGDDVQEGDELAKRPNFKMPYKGADM.

Residues 1–18 (MQFTLIFFYATLAAFGLA) form the signal peptide. 5 propeptides span residues 19 to 38 (APSE…LDKR), 48 to 65 (ADLV…LDKR), 75 to 92 (ADMV…LDKR), 102 to 119 (ADMV…LAKR), and 129 to 131 (ADM).

Post-translationally, gigA is processed by several endopeptidases including kexin proteases to produce 2 identical copies of the nonaxapeptide Ile-Asn-Phe-Lys-Ile-Pro-Tyr-Thr-Gly, one copy of the nonaketide Ile-Gly-Phe-Lys-Leu-Pro-Tyr-Arg-Gly and one copy of the nonaketide Pro-Asn-Phe-Lys-Met-Pro-Tyr-Arg-Gly, that are further modified into phomapsins B, C and A, respectively. After being excised from the precursor peptide, the core peptides are cyclized and modified post-translationally by enzymes encoded within the gene cluster. Epichloecyclin biosynthesis requires only dimethylation of the side-chain amino group of the conserved lysine for completion.

Its pathway is mycotoxin biosynthesis. In terms of biological role, ribosomally synthesized cyclic peptide phomopsin precursor; part of the gene cluster that mediates the biosynthesis of the epichloecyclins, a group of nonapeptides, with a likely cyclic structure and dimethylation of the conserved lysine. The gigA translated product contains 4 repeated peptide embedding the nonapeptide Ile-Asn-Phe-Lys-Ile-Pro-Tyr-Thr-Gly in repeats 1 and 2, Ile-Gly-Phe-Lys-Leu-Pro-Tyr-Arg-Gly in repeat 3, and Pro-Asn-Phe-Lys-Met-Pro-Tyr-Arg-Gly in repeat 4 that are converted into epichloecyclins B, C and A, respectively. Moreover, removal of the last Gly residue in epichloecyclins B and C leads to epichloecyclins D and E, respectively. The polypeptide is Ribosomally synthesized cyclic peptide phomopsin precursor gigA (nc25) (Epichloe festucae (strain Fl1)).